A 403-amino-acid polypeptide reads, in one-letter code: Phosphopentomutase (403 aa).

The Mn(2+) site is built by Asp-13, Asp-298, His-303, Asp-339, His-340, and His-351.

This sequence belongs to the phosphopentomutase family. Mn(2+) serves as cofactor.

It is found in the cytoplasm. It catalyses the reaction 2-deoxy-alpha-D-ribose 1-phosphate = 2-deoxy-D-ribose 5-phosphate. The enzyme catalyses alpha-D-ribose 1-phosphate = D-ribose 5-phosphate. Its pathway is carbohydrate degradation; 2-deoxy-D-ribose 1-phosphate degradation; D-glyceraldehyde 3-phosphate and acetaldehyde from 2-deoxy-alpha-D-ribose 1-phosphate: step 1/2. In terms of biological role, isomerase that catalyzes the conversion of deoxy-ribose 1-phosphate (dRib-1-P) and ribose 1-phosphate (Rib-1-P) to deoxy-ribose 5-phosphate (dRib-5-P) and ribose 5-phosphate (Rib-5-P), respectively. This Streptococcus pyogenes serotype M2 (strain MGAS10270) protein is Phosphopentomutase.